We begin with the raw amino-acid sequence, 222 residues long: 2-C-methyl-D-erythritol 4-phosphate cytidylyltransferase (222 aa).

The protein belongs to the IspD/TarI cytidylyltransferase family. IspD subfamily.

It catalyses the reaction 2-C-methyl-D-erythritol 4-phosphate + CTP + H(+) = 4-CDP-2-C-methyl-D-erythritol + diphosphate. It participates in isoprenoid biosynthesis; isopentenyl diphosphate biosynthesis via DXP pathway; isopentenyl diphosphate from 1-deoxy-D-xylulose 5-phosphate: step 2/6. Catalyzes the formation of 4-diphosphocytidyl-2-C-methyl-D-erythritol from CTP and 2-C-methyl-D-erythritol 4-phosphate (MEP). In Thermotoga petrophila (strain ATCC BAA-488 / DSM 13995 / JCM 10881 / RKU-1), this protein is 2-C-methyl-D-erythritol 4-phosphate cytidylyltransferase.